The chain runs to 399 residues: Carbamoyl phosphate synthase small chain (399 aa).

The interval 1–206 (MTQTIPSPKP…NKGYKTNNDA (206 aa)) is CPSase. The L-glutamine site is built by S60, G258, and G260. A Glutamine amidotransferase type-1 domain is found at 210-398 (HIVAIDYGIK…FNLIMDYKKT (189 aa)). C287 functions as the Nucleophile in the catalytic mechanism. L-glutamine is bound by residues L288, Q291, N329, G331, and F332. Catalysis depends on residues H371 and E373.

The protein belongs to the CarA family. In terms of assembly, composed of two chains; the small (or glutamine) chain promotes the hydrolysis of glutamine to ammonia, which is used by the large (or ammonia) chain to synthesize carbamoyl phosphate. Tetramer of heterodimers (alpha,beta)4.

The catalysed reaction is hydrogencarbonate + L-glutamine + 2 ATP + H2O = carbamoyl phosphate + L-glutamate + 2 ADP + phosphate + 2 H(+). It catalyses the reaction L-glutamine + H2O = L-glutamate + NH4(+). The protein operates within amino-acid biosynthesis; L-arginine biosynthesis; carbamoyl phosphate from bicarbonate: step 1/1. Its pathway is pyrimidine metabolism; UMP biosynthesis via de novo pathway; (S)-dihydroorotate from bicarbonate: step 1/3. Functionally, small subunit of the glutamine-dependent carbamoyl phosphate synthetase (CPSase). CPSase catalyzes the formation of carbamoyl phosphate from the ammonia moiety of glutamine, carbonate, and phosphate donated by ATP, constituting the first step of 2 biosynthetic pathways, one leading to arginine and/or urea and the other to pyrimidine nucleotides. The small subunit (glutamine amidotransferase) binds and cleaves glutamine to supply the large subunit with the substrate ammonia. This chain is Carbamoyl phosphate synthase small chain, found in Bartonella henselae (strain ATCC 49882 / DSM 28221 / CCUG 30454 / Houston 1) (Rochalimaea henselae).